The sequence spans 254 residues: 5-oxoprolinase subunit A (254 aa).

The protein belongs to the LamB/PxpA family. In terms of assembly, forms a complex composed of PxpA, PxpB and PxpC.

It carries out the reaction 5-oxo-L-proline + ATP + 2 H2O = L-glutamate + ADP + phosphate + H(+). Its function is as follows. Catalyzes the cleavage of 5-oxoproline to form L-glutamate coupled to the hydrolysis of ATP to ADP and inorganic phosphate. This is 5-oxoprolinase subunit A from Burkholderia lata (strain ATCC 17760 / DSM 23089 / LMG 22485 / NCIMB 9086 / R18194 / 383).